Reading from the N-terminus, the 503-residue chain is D-xylose-proton symporter-like 1 (503 aa).

The segment at 1–23 (MGFDPENQSISSVGQVVGDSSSG) is disordered. Residues 8 to 23 (QSISSVGQVVGDSSSG) are compositionally biased toward low complexity. The next 12 membrane-spanning stretches (helical) occupy residues 51–73 (FLFPALGALLFGYEIGATSCAIM), 95–115 (IITSGSLYGALIGSIVAFSVA), 129–149 (FLYLVGAIVTVVAPVFSILII), 152–172 (VTYGMGIGLTMHAAPMYIAET), 190–210 (VLGMVGGYGIGSLWITVISGW), 213–233 (MYATILPFPVIMGTGMCWLPA), 305–325 (ALTIAGGLVLFQQITGQPSVL), 346–366 (ISILLGLLKLVMTGVSVIVID), 374–394 (LLCGVSGMVISLFLLGSYYMF), 405–425 (ALLLYVGCYQLSFGPIGWLMI), 437–457 (GISLAVLVNFGANALVTFAFS), and 467–487 (ILFCAFGVICVVSLFFIYYIV).

This sequence belongs to the major facilitator superfamily. Sugar transporter (TC 2.A.1.1) family.

Its subcellular location is the membrane. The polypeptide is D-xylose-proton symporter-like 1 (Arabidopsis thaliana (Mouse-ear cress)).